Reading from the N-terminus, the 548-residue chain is Glycosyl hydrolase family 109 protein 3 (548 aa).

The first 21 residues, 1–21 (MKLKKLLLSVLMLLSISGLQA), serve as a signal peptide directing secretion. Residues 71–72 (MR), aspartate 93, 141–144 (WNHH), 161–162 (EV), and asparagine 190 each bind NAD(+). A substrate-binding site is contributed by tyrosine 219. 240–244 (DNLHW) contributes to the NAD(+) binding site. Substrate contacts are provided by residues arginine 245, 257-260 (YATH), and tyrosine 335. Tyrosine 257 serves as a coordination point for NAD(+).

It belongs to the Gfo/Idh/MocA family. Glycosyl hydrolase 109 subfamily. NAD(+) serves as cofactor.

In terms of biological role, glycosidase. The chain is Glycosyl hydrolase family 109 protein 3 from Phocaeicola vulgatus (strain ATCC 8482 / DSM 1447 / JCM 5826 / CCUG 4940 / NBRC 14291 / NCTC 11154) (Bacteroides vulgatus).